We begin with the raw amino-acid sequence, 492 residues long: Probable protein phosphatase 2C 33 (492 aa).

Residues Met1–Glu46 form a disordered region. Residues Val24–Gly35 are compositionally biased toward basic residues. Residues Val64–Leu393 form the PPM-type phosphatase domain. Residues Asp100, Gly101, Asp338, and Asp384 each contribute to the Mn(2+) site. A disordered region spans residues Ser406 to Thr468. Positions Asp412 to Ala427 are enriched in acidic residues. The span at Ser441 to Asp460 shows a compositional bias: basic and acidic residues.

It belongs to the PP2C family. Mg(2+) serves as cofactor. Mn(2+) is required as a cofactor.

The catalysed reaction is O-phospho-L-seryl-[protein] + H2O = L-seryl-[protein] + phosphate. It carries out the reaction O-phospho-L-threonyl-[protein] + H2O = L-threonyl-[protein] + phosphate. In Arabidopsis thaliana (Mouse-ear cress), this protein is Probable protein phosphatase 2C 33 (PPC6-1).